The primary structure comprises 331 residues: Phospho-N-acetylmuramoyl-pentapeptide-transferase (331 aa).

9 consecutive transmembrane segments (helical) span residues 7–27, 54–74, 78–98, 106–126, 133–153, 154–174, 195–215, 249–269, and 311–331; these read IIYT…LTIP, TIGG…SGLI, LWIA…DDFI, LGLR…ILAI, IMGT…AGFT, ITQT…VVVA, IIAA…LAIF, AIAT…VGGI, and VVIV…LALS.

The protein belongs to the glycosyltransferase 4 family. MraY subfamily. Mg(2+) serves as cofactor.

The protein localises to the cell membrane. The catalysed reaction is UDP-N-acetyl-alpha-D-muramoyl-L-alanyl-gamma-D-glutamyl-meso-2,6-diaminopimeloyl-D-alanyl-D-alanine + di-trans,octa-cis-undecaprenyl phosphate = di-trans,octa-cis-undecaprenyl diphospho-N-acetyl-alpha-D-muramoyl-L-alanyl-D-glutamyl-meso-2,6-diaminopimeloyl-D-alanyl-D-alanine + UMP. Its pathway is cell wall biogenesis; peptidoglycan biosynthesis. In terms of biological role, catalyzes the initial step of the lipid cycle reactions in the biosynthesis of the cell wall peptidoglycan: transfers peptidoglycan precursor phospho-MurNAc-pentapeptide from UDP-MurNAc-pentapeptide onto the lipid carrier undecaprenyl phosphate, yielding undecaprenyl-pyrophosphoryl-MurNAc-pentapeptide, known as lipid I. In Alkaliphilus metalliredigens (strain QYMF), this protein is Phospho-N-acetylmuramoyl-pentapeptide-transferase.